The sequence spans 255 residues: Myogenic factor 5 (255 aa).

Residues 83–134 (DRRKAATMRERRRLKKVNQAFETLKRCTTTNPNQRLPKVEILRNAIRYIESL) enclose the bHLH domain. Residues 226–249 (DTASLSPATSANSQPATPGPSSSR) form a disordered region.

Efficient DNA binding requires dimerization with another bHLH protein.

It is found in the nucleus. Functionally, acts as a transcriptional activator that promotes transcription of muscle-specific target genes and plays a role in muscle differentiation. Together with MYOG and MYOD1, co-occupies muscle-specific gene promoter core region during myogenesis. Induces fibroblasts to differentiate into myoblasts. Probable sequence specific DNA-binding protein. This chain is Myogenic factor 5 (Myf5), found in Mus musculus (Mouse).